We begin with the raw amino-acid sequence, 276 residues long: MANVLKEKMYDELLSATCRILKLGSHDYRITERNLLSKNPKFPLCDIILKLDYAYNLEYLLSLWEHVTKQEPRFVFKNTGGAVSMSCYLHAPVKVEGHHAVRECNILRVNECLTVRMSDIVAMKPSTFAVFTKCIIRRNRDDTYVVEFVAFGPENESEYISLLKAIFLKKCSMGKQHLESNRFCQGLRRRSSHVLEKGRFESSGKVVNKASAVVTSQESIKQFYEKEKSLLSGVKFWRLSERHCRFALVGICFLLALYFCYVLLKKTPTPASGSVV.

At 1–245 the chain is on the perinuclear space side; it reads MANVLKEKMY…FWRLSERHCR (245 aa). The chain crosses the membrane as a helical span at residues 246-264; it reads FALVGICFLLALYFCYVLL. Residues 265–276 lie on the Nuclear side of the membrane; that stretch reads KKTPTPASGSVV.

It belongs to the herpesviridae NEC2 protein family. As to quaternary structure, forms a heterohexameric complex with NEC1. In terms of processing, phosphorylated.

It is found in the host nucleus inner membrane. Plays an essential role in virion nuclear egress, the first step of virion release from infected cell. Within the host nucleus, NEC1 interacts with the newly formed capsid through the vertexes and directs it to the inner nuclear membrane by associating with NEC2. Induces the budding of the capsid at the inner nuclear membrane as well as its envelopment into the perinuclear space. There, the NEC1/NEC2 complex promotes the fusion of the enveloped capsid with the outer nuclear membrane and the subsequent release of the viral capsid into the cytoplasm where it will reach the secondary budding sites in the host Golgi or trans-Golgi network. In Homo sapiens (Human), this protein is Nuclear egress protein 2.